The chain runs to 694 residues: Prolyl 3-hydroxylase 2 (694 aa).

The signal sequence occupies residues 1–23 (MAPGSRSWGAVLLLAAMLPAACG). TPR repeat units lie at residues 35 to 68 (FDAL…RREL), 136 to 169 (RVPY…NPEH), 196 to 229 (HMED…YYAE), and 292 to 325 (PLHY…HPDD). A coiled-coil region spans residues 386–418 (KRYGARQDEHSVPSSISSEPEDGPRLSLTKKPT). Positions 395–427 (HSVPSSISSEPEDGPRLSLTKKPTPKPDRELKE) are disordered. N446 and N535 each carry an N-linked (GlcNAc...) asparagine glycan. Residues 543–657 (THLVCRTALS…RCAVALWFTL (115 aa)) enclose the Fe2OG dioxygenase domain. Fe cation contacts are provided by H566, D568, and H638. R648 is an active-site residue. The Prevents secretion from ER motif lies at 691-694 (KDEL).

This sequence belongs to the leprecan family. Fe cation serves as cofactor. It depends on L-ascorbate as a cofactor.

It is found in the endoplasmic reticulum. It localises to the sarcoplasmic reticulum. The protein localises to the golgi apparatus. It carries out the reaction L-prolyl-[collagen] + 2-oxoglutarate + O2 = trans-3-hydroxy-L-prolyl-[collagen] + succinate + CO2. In terms of biological role, prolyl 3-hydroxylase that catalyzes the post-translational formation of 3-hydroxyproline on collagens. Contributes to proline 3-hydroxylation of collagen COL4A1 and COL1A1 in tendons, the eye sclera and in the eye lens capsule. Has high activity with the type IV collagen COL4A1, and lower activity with COL1A1. Catalyzes hydroxylation of the first Pro in Gly-Pro-Hyp sequences where Hyp is 4-hydroxyproline. Has no activity on substrates that lack 4-hydroxyproline in the third position. The polypeptide is Prolyl 3-hydroxylase 2 (Gallus gallus (Chicken)).